Here is an 881-residue protein sequence, read N- to C-terminus: Interference hedgehog (881 aa).

Positions 1–26 are cleaved as a signal peptide; that stretch reads MSSSSSSLLLMMLLLLLLLLTSKLEA. Residues 27–693 are Extracellular-facing; it reads IPVLSSTSPS…NHNETYSLNP (667 aa). 4 Ig-like C2-type domains span residues 37–138, 128–228, 242–330, and 336–425; these read PGVR…IARL, PLVV…IPSS, PYLL…YINV, and PVIV…LQVN. Intrachain disulfides connect Cys-60/Cys-122, Cys-167/Cys-212, and Cys-266/Cys-314. N-linked (GlcNAc...) asparagine glycosylation is found at Asn-75, Asn-98, Asn-194, Asn-201, Asn-282, Asn-349, Asn-381, Asn-430, and Asn-455. The cysteines at positions 358 and 407 are disulfide-linked. Fibronectin type-III domains follow at residues 450–558 and 566–661; these read PPSA…LQRG and VPEL…TQRS. Heparin-binding residues include Arg-486, Lys-492, and Lys-494. Asn-517 carries an N-linked (GlcNAc...) asparagine glycan. Arg-532 provides a ligand contact to heparin. N-linked (GlcNAc...) asparagine glycosylation occurs at Asn-548. Residues 655-685 form a disordered region; sequence QGRTQRSKLTTTEQPIQQKGGDRNVNTTPNH. Positions 656-671 are enriched in polar residues; sequence GRTQRSKLTTTEQPIQ. Asn-686 carries N-linked (GlcNAc...) asparagine glycosylation. Residues 694–714 form a helical membrane-spanning segment; that stretch reads LLTGTIGGGALLLLLLIAFSF. Residues 715–881 lie on the Cytoplasmic side of the membrane; it reads CLCRRKNRNG…SSGSLNSVGV (167 aa). 2 disordered regions span residues 768–791 and 809–881; these read NPLD…NSPH and PTTY…SVGV. Over residues 837 to 855 the composition is skewed to polar residues; it reads PGSNNNLQQIGSETTTTGQ. Positions 865–881 are enriched in low complexity; that stretch reads SSRSENLSSGSLNSVGV.

The protein belongs to the immunoglobulin superfamily. IHOG family. In terms of assembly, homodimer. Heterotetramer; 2 iHog chains bind 2 hh chains when facilitated by heparin, heparin is required to promote high-affinity interactions between hh and iHog.

The protein localises to the membrane. Functionally, mediates response to the active Hedgehog (Hh) protein signal in embryos, functioning upstream or at the level of patched (ptc). This is Interference hedgehog from Drosophila willistoni (Fruit fly).